The primary structure comprises 141 residues: Small ribosomal subunit protein uS8c (141 aa).

It belongs to the universal ribosomal protein uS8 family. Part of the 30S ribosomal subunit.

The protein localises to the plastid. It localises to the chloroplast. Functionally, one of the primary rRNA binding proteins, it binds directly to 16S rRNA central domain where it helps coordinate assembly of the platform of the 30S subunit. In Chlamydomonas reinhardtii (Chlamydomonas smithii), this protein is Small ribosomal subunit protein uS8c (rps8).